Here is a 559-residue protein sequence, read N- to C-terminus: Forkhead box protein O6 (559 aa).

Disordered regions lie at residues 1-77 (MAAK…VGPL) and 163-183 (SWWM…RRAV). The fork-head DNA-binding region spans 88–182 (WGNLSYADLI…KTGKTPRRRA (95 aa)). Phosphoserine is present on serine 184. 2 disordered regions span residues 197–232 (KASK…KWAA) and 534–559 (NFDS…WVPG). Composition is skewed to pro residues over residues 213 to 222 (DSPPGAPVPG) and 539 to 553 (LPPP…PPPN).

Post-translationally, phosphorylation of Ser-184 is be important in regulating the transacriptional activity. In terms of tissue distribution, expressed in brain in areas of the nucleus accumbens, cingulate cortex, parts of the amygdala and in the hippocampus.

It localises to the cytoplasm. Its subcellular location is the nucleus. Functionally, transcriptional activator. In Mus musculus (Mouse), this protein is Forkhead box protein O6 (Foxo6).